A 536-amino-acid chain; its full sequence is CTP synthase (536 aa).

Positions 1–267 are amidoligase domain; the sequence is MSKFVFVTGG…CKETLKYLEL (267 aa). Position 13 (Ser-13) interacts with CTP. UTP is bound at residue Ser-13. ATP-binding positions include 14–19 and Asp-71; that span reads SIGKGI. Mg(2+) contacts are provided by Asp-71 and Glu-141. CTP is bound by residues 148–150, 188–193, and Lys-224; these read DIE and KTKPTQ. Residues 188-193 and Lys-224 contribute to the UTP site; that span reads KTKPTQ. A Glutamine amidotransferase type-1 domain is found at 292-534; it reads KVALVGKYIE…IKSSQENLTQ (243 aa). Gly-354 serves as a coordination point for L-glutamine. Catalysis depends on Cys-381, which acts as the Nucleophile; for glutamine hydrolysis. Residues 382–385, Glu-405, and Arg-462 contribute to the L-glutamine site; that span reads LGMQ. Active-site residues include His-507 and Glu-509.

Belongs to the CTP synthase family. As to quaternary structure, homotetramer.

The catalysed reaction is UTP + L-glutamine + ATP + H2O = CTP + L-glutamate + ADP + phosphate + 2 H(+). It catalyses the reaction L-glutamine + H2O = L-glutamate + NH4(+). The enzyme catalyses UTP + NH4(+) + ATP = CTP + ADP + phosphate + 2 H(+). It participates in pyrimidine metabolism; CTP biosynthesis via de novo pathway; CTP from UDP: step 2/2. With respect to regulation, allosterically activated by GTP, when glutamine is the substrate; GTP has no effect on the reaction when ammonia is the substrate. The allosteric effector GTP functions by stabilizing the protein conformation that binds the tetrahedral intermediate(s) formed during glutamine hydrolysis. Inhibited by the product CTP, via allosteric rather than competitive inhibition. Its function is as follows. Catalyzes the ATP-dependent amination of UTP to CTP with either L-glutamine or ammonia as the source of nitrogen. Regulates intracellular CTP levels through interactions with the four ribonucleotide triphosphates. In Prochlorococcus marinus (strain MIT 9312), this protein is CTP synthase.